A 247-amino-acid polypeptide reads, in one-letter code: Homeobox-leucine zipper protein HOX17 (247 aa).

The tract at residues E58 to R81 is disordered. Residues G79 to Q138 constitute a DNA-binding region (homeobox). Positions K137–S182 are leucine-zipper.

The protein belongs to the HD-ZIP homeobox family. Class II subfamily. As to expression, expressed in seedlings, roots, stems, leaf sheaths and blades and panicles.

It localises to the nucleus. Probable transcription factor. In Oryza sativa subsp. indica (Rice), this protein is Homeobox-leucine zipper protein HOX17 (HOX17).